A 179-amino-acid chain; its full sequence is Large ribosomal subunit protein uL6 (179 aa).

Belongs to the universal ribosomal protein uL6 family. In terms of assembly, part of the 50S ribosomal subunit.

This protein binds to the 23S rRNA, and is important in its secondary structure. It is located near the subunit interface in the base of the L7/L12 stalk, and near the tRNA binding site of the peptidyltransferase center. This is Large ribosomal subunit protein uL6 from Leptospira borgpetersenii serovar Hardjo-bovis (strain JB197).